We begin with the raw amino-acid sequence, 244 residues long: tRNA (guanine-N(7)-)-methyltransferase (244 aa).

The tract at residues 1–24 (MTDSHVPHPESPAVEEGEERPHRR) is disordered. Glutamate 74, glutamate 99, aspartate 126, and aspartate 149 together coordinate S-adenosyl-L-methionine. Residue aspartate 149 is part of the active site. Residues lysine 153, aspartate 185, and 222 to 225 (TKFE) each bind substrate.

The protein belongs to the class I-like SAM-binding methyltransferase superfamily. TrmB family.

It carries out the reaction guanosine(46) in tRNA + S-adenosyl-L-methionine = N(7)-methylguanosine(46) in tRNA + S-adenosyl-L-homocysteine. It participates in tRNA modification; N(7)-methylguanine-tRNA biosynthesis. Its function is as follows. Catalyzes the formation of N(7)-methylguanine at position 46 (m7G46) in tRNA. In Pseudomonas syringae pv. syringae (strain B728a), this protein is tRNA (guanine-N(7)-)-methyltransferase.